The sequence spans 78 residues: MANIKSAIKRAELNVKQNEKNSAQKSAMRTAIKAFEANPSEELFRAASSAIDKAETKGLIHKNKASRDKARLSAKLAK.

The protein belongs to the bacterial ribosomal protein bS20 family.

Functionally, binds directly to 16S ribosomal RNA. This chain is Small ribosomal subunit protein bS20, found in Streptococcus pneumoniae serotype 2 (strain D39 / NCTC 7466).